The chain runs to 63 residues: uncharacterized protein (63 aa).

Residues 38–58 (ISLFIILHLCLLVCLLLSFYF) form a helical membrane-spanning segment.

The protein localises to the membrane. This is an uncharacterized protein from Saccharomyces cerevisiae (strain ATCC 204508 / S288c) (Baker's yeast).